The sequence spans 289 residues: Nucleotide-binding protein COPRO5265_0725 (289 aa).

9–16 (GLSGAGKS) is a binding site for ATP. 59-62 (DSRS) provides a ligand contact to GTP.

The protein belongs to the RapZ-like family.

Functionally, displays ATPase and GTPase activities. In Coprothermobacter proteolyticus (strain ATCC 35245 / DSM 5265 / OCM 4 / BT), this protein is Nucleotide-binding protein COPRO5265_0725.